The primary structure comprises 94 residues: Co-chaperonin GroES (94 aa).

Belongs to the GroES chaperonin family. Heptamer of 7 subunits arranged in a ring. Interacts with the chaperonin GroEL.

The protein localises to the cytoplasm. Functionally, together with the chaperonin GroEL, plays an essential role in assisting protein folding. The GroEL-GroES system forms a nano-cage that allows encapsulation of the non-native substrate proteins and provides a physical environment optimized to promote and accelerate protein folding. GroES binds to the apical surface of the GroEL ring, thereby capping the opening of the GroEL channel. This Bacillus pumilus (strain SAFR-032) protein is Co-chaperonin GroES.